The chain runs to 89 residues: Large ribosomal subunit protein bL31B (89 aa).

This sequence belongs to the bacterial ribosomal protein bL31 family. Type B subfamily. As to quaternary structure, part of the 50S ribosomal subunit.

The protein is Large ribosomal subunit protein bL31B of Enterococcus faecalis (strain ATCC 700802 / V583).